A 637-amino-acid chain; its full sequence is Penicillin-binding protein 1A (637 aa).

The interval 62–224 (LIADLGSERR…NQYDPYSHPE (163 aa)) is transglycosylase. Catalysis depends on Glu91, which acts as the Proton donor; for transglycosylase activity. Residues 298–612 (EVYTNVDSKV…RLTPIVGDGF (315 aa)) form a transpeptidase region. The Acyl-ester intermediate; for transpeptidase activity role is filled by Ser371.

The protein in the N-terminal section; belongs to the glycosyltransferase 51 family. It in the C-terminal section; belongs to the transpeptidase family.

The protein localises to the secreted. It catalyses the reaction [GlcNAc-(1-&gt;4)-Mur2Ac(oyl-L-Ala-gamma-D-Glu-L-Lys-D-Ala-D-Ala)](n)-di-trans,octa-cis-undecaprenyl diphosphate + beta-D-GlcNAc-(1-&gt;4)-Mur2Ac(oyl-L-Ala-gamma-D-Glu-L-Lys-D-Ala-D-Ala)-di-trans,octa-cis-undecaprenyl diphosphate = [GlcNAc-(1-&gt;4)-Mur2Ac(oyl-L-Ala-gamma-D-Glu-L-Lys-D-Ala-D-Ala)](n+1)-di-trans,octa-cis-undecaprenyl diphosphate + di-trans,octa-cis-undecaprenyl diphosphate + H(+). It carries out the reaction Preferential cleavage: (Ac)2-L-Lys-D-Ala-|-D-Ala. Also transpeptidation of peptidyl-alanyl moieties that are N-acyl substituents of D-alanine.. It functions in the pathway cell wall biogenesis; peptidoglycan biosynthesis. Functionally, cell wall formation. This Streptococcus oralis protein is Penicillin-binding protein 1A (ponA).